A 140-amino-acid chain; its full sequence is Relaxin-3 (140 aa).

Positions 1–23 are cleaved as a signal peptide; sequence MATRGLLLASWALLGALVLQAEA. Intrachain disulfides connect Cys-33–Cys-127, Cys-45–Cys-140, and Cys-126–Cys-131. A propeptide spans 53–116 (connecting peptide); it reads ADILAHDPLG…GSPGVVRGSR (64 aa).

Belongs to the insulin family. Heterodimer of a B chain and an A chain linked by two disulfide bonds. Highly abundant expression is detected in neurons within the ventomedial dorsal tegmental nucleus and the laterally central gray alpha of the pons. Also detected at much lower levels within the hippocampus.

The protein resides in the secreted. May play a role in neuropeptide signaling processes. Ligand for LGR7, relaxin-3 receptor-1 and relaxin-3 receptor-2. The chain is Relaxin-3 (Rln3) from Rattus norvegicus (Rat).